The primary structure comprises 62 residues: Large ribosomal subunit protein bL33 (62 aa).

It belongs to the bacterial ribosomal protein bL33 family.

The protein is Large ribosomal subunit protein bL33 of Parabacteroides distasonis (strain ATCC 8503 / DSM 20701 / CIP 104284 / JCM 5825 / NCTC 11152).